The chain runs to 337 residues: Aspartate-semialdehyde dehydrogenase 2 (337 aa).

NADP(+) contacts are provided by residues 13–16 and 41–42; these read TGAV and RS. Residue Arg101 coordinates phosphate. The active-site Acyl-thioester intermediate is Cys132. Gln159 contributes to the substrate binding site. 162 to 163 contributes to the NADP(+) binding site; the sequence is SG. Lys216 contacts phosphate. Arg238 is a substrate binding site. Catalysis depends on His245, which acts as the Proton acceptor. Asn316 lines the NADP(+) pocket.

The protein belongs to the aspartate-semialdehyde dehydrogenase family. Homodimer.

The catalysed reaction is L-aspartate 4-semialdehyde + phosphate + NADP(+) = 4-phospho-L-aspartate + NADPH + H(+). Its pathway is amino-acid biosynthesis; L-lysine biosynthesis via DAP pathway; (S)-tetrahydrodipicolinate from L-aspartate: step 2/4. It functions in the pathway amino-acid biosynthesis; L-methionine biosynthesis via de novo pathway; L-homoserine from L-aspartate: step 2/3. The protein operates within amino-acid biosynthesis; L-threonine biosynthesis; L-threonine from L-aspartate: step 2/5. Functionally, catalyzes the NADPH-dependent formation of L-aspartate-semialdehyde (L-ASA) by the reductive dephosphorylation of L-aspartyl-4-phosphate. The polypeptide is Aspartate-semialdehyde dehydrogenase 2 (asd2) (Vibrio cholerae serotype O1 (strain ATCC 39315 / El Tor Inaba N16961)).